The primary structure comprises 367 residues: Probable butyrate kinase (367 aa).

It belongs to the acetokinase family.

It is found in the cytoplasm. It carries out the reaction butanoate + ATP = butanoyl phosphate + ADP. The polypeptide is Probable butyrate kinase (Bacillus cytotoxicus (strain DSM 22905 / CIP 110041 / 391-98 / NVH 391-98)).